The sequence spans 416 residues: Cell division protein FtsZ (416 aa).

Residues 20-24, 107-109, glutamate 138, arginine 142, and aspartate 186 each bind GTP; these read GGGVN and GTG. Polar residues predominate over residues 319 to 335; the sequence is QETNANNSSPAQRQAES. Residues 319–416 form a disordered region; it reads QETNANNSSP…DSLDFPDFLK (98 aa). Positions 376–392 are enriched in acidic residues; the sequence is QDDDIPDDAGFDVDLPA. Residues 404–416 show a composition bias toward basic and acidic residues; sequence ARKDSLDFPDFLK.

Belongs to the FtsZ family. Homodimer. Polymerizes to form a dynamic ring structure in a strictly GTP-dependent manner. Interacts directly with several other division proteins.

The protein resides in the cytoplasm. In terms of biological role, essential cell division protein that forms a contractile ring structure (Z ring) at the future cell division site. The regulation of the ring assembly controls the timing and the location of cell division. One of the functions of the FtsZ ring is to recruit other cell division proteins to the septum to produce a new cell wall between the dividing cells. Binds GTP and shows GTPase activity. The sequence is that of Cell division protein FtsZ from Kocuria rhizophila (strain ATCC 9341 / DSM 348 / NBRC 103217 / DC2201).